The sequence spans 274 residues: Ubiquinone biosynthesis protein COQ4 homolog, mitochondrial (274 aa).

Residues 1 to 20 (MLRQTAFRSMKLNRTPGRYF) constitute a mitochondrion transit peptide. The interval 13–40 (NRTPGRYFTTAENMDTGSSQSPPDTEQK) is disordered. The span at 22 to 36 (TAENMDTGSSQSPPD) shows a compositional bias: polar residues. Zn(2+) is bound by residues His-177, Asp-178, His-181, and Glu-193.

This sequence belongs to the COQ4 family. As to quaternary structure, component of a multi-subunit COQ enzyme complex. Zn(2+) is required as a cofactor.

The protein localises to the mitochondrion inner membrane. It carries out the reaction a 4-hydroxy-3-methoxy-5-(all-trans-polyprenyl)benzoate + H(+) = a 2-methoxy-6-(all-trans-polyprenyl)phenol + CO2. Its pathway is cofactor biosynthesis; ubiquinone biosynthesis. Lyase that catalyzes the C1-decarboxylation of 4-hydroxy-3-methoxy-5-(all-trans-polyprenyl)benzoic acid into 2-methoxy-6-(all-trans-polyprenyl)phenol during ubiquinone biosynthesis. The sequence is that of Ubiquinone biosynthesis protein COQ4 homolog, mitochondrial from Aedes aegypti (Yellowfever mosquito).